Here is a 128-residue protein sequence, read N- to C-terminus: Small ribosomal subunit protein uS12 (128 aa).

3-methylthioaspartic acid is present on Asp89. The tract at residues 101–128 (SLDTSGVADRRQGRSKYGAKRPKGAAAK) is disordered. Basic residues predominate over residues 113–128 (GRSKYGAKRPKGAAAK).

Belongs to the universal ribosomal protein uS12 family. As to quaternary structure, part of the 30S ribosomal subunit. Contacts proteins S8 and S17. May interact with IF1 in the 30S initiation complex.

Functionally, with S4 and S5 plays an important role in translational accuracy. In terms of biological role, interacts with and stabilizes bases of the 16S rRNA that are involved in tRNA selection in the A site and with the mRNA backbone. Located at the interface of the 30S and 50S subunits, it traverses the body of the 30S subunit contacting proteins on the other side and probably holding the rRNA structure together. The combined cluster of proteins S8, S12 and S17 appears to hold together the shoulder and platform of the 30S subunit. This Prosthecochloris aestuarii (strain DSM 271 / SK 413) protein is Small ribosomal subunit protein uS12.